A 194-amino-acid chain; its full sequence is Large ribosomal subunit protein eL15 (194 aa).

The interval 164-194 (SAGKKGRGLRNKGIGAEKVRPSIRAHGRRGK) is disordered. Basic residues predominate over residues 184-194 (PSIRAHGRRGK).

This sequence belongs to the eukaryotic ribosomal protein eL15 family.

The sequence is that of Large ribosomal subunit protein eL15 (rpl15e) from Methanocaldococcus jannaschii (strain ATCC 43067 / DSM 2661 / JAL-1 / JCM 10045 / NBRC 100440) (Methanococcus jannaschii).